A 119-amino-acid polypeptide reads, in one-letter code: Host cell factor C1 regulator 1 (119 aa).

The segment at 1-34 is disordered; it reads MILQQPLERGPQGRAQRDPRAASGASGGLDAREP. The interaction with HCFC1 stretch occupies residues 57 to 60; sequence DHPY. The short motif at 91–100 is the Nuclear export signal element; it reads IPEALRLLRL.

Interacts with HCFC1.

The protein resides in the cytoplasm. The protein localises to the nucleus. Regulates HCFC1 activity by modulating its subcellular localization. Overexpression of HCFC1R1 leads to accumulation of HCFC1 in the cytoplasm. HCFC1R1-mediated export may provide the pool of cytoplasmic HCFC1 required for import of virion-derived VP16 into the nucleus. In Bos taurus (Bovine), this protein is Host cell factor C1 regulator 1 (HCFC1R1).